The chain runs to 340 residues: MLIAQRPSLTEEVVDEFRSRFVIEPLEPGFGYTLGNSLRRTLLSSIPGAAVTSIRIDGVLHEFTTVPGVKEDVTDLILNIKQLVVSSEHDEPVVMYLRKQGPGLVTAADIAPPAGVEVHNPDLVLATLNGKGKLEMELTVERGRGYVSAVQNKQVGQEIGRIPVDSIYSPVLKVTYKVEATRVEQRTDFDKLIVDVETKQAMRPRDAMASAGKTLVELFGLARELNIDAEGIDMGPSPTDAALAADLALPIEELELTVRSYNCLKREGIHSVGELVARSEADLLDIRNFGAKSIDEVKAKLAGMGLALKDSPPGFDPTAAADAFGADDDADAGFVETEQY.

An alpha N-terminal domain (alpha-NTD) region spans residues Met1–Asn226. The segment at Leu243–Tyr340 is alpha C-terminal domain (alpha-CTD).

Belongs to the RNA polymerase alpha chain family. In terms of assembly, homodimer. The RNAP catalytic core consists of 2 alpha, 1 beta, 1 beta' and 1 omega subunit. When a sigma factor is associated with the core the holoenzyme is formed, which can initiate transcription.

The catalysed reaction is RNA(n) + a ribonucleoside 5'-triphosphate = RNA(n+1) + diphosphate. Its function is as follows. DNA-dependent RNA polymerase catalyzes the transcription of DNA into RNA using the four ribonucleoside triphosphates as substrates. The polypeptide is DNA-directed RNA polymerase subunit alpha (Streptomyces avermitilis (strain ATCC 31267 / DSM 46492 / JCM 5070 / NBRC 14893 / NCIMB 12804 / NRRL 8165 / MA-4680)).